Here is a 176-residue protein sequence, read N- to C-terminus: Signal peptidase complex catalytic subunit SEC11 (176 aa).

The Cytoplasmic portion of the chain corresponds to 1–9; sequence MNLRQQLGS. Residues 10 to 30 form a helical; Signal-anchor for type II membrane protein membrane-spanning segment; sequence GLSMAMVLASAFAFWKLFSIV. The Lumenal portion of the chain corresponds to 31-176; sequence TMSNSPIVVV…LGLSALVQDE (146 aa). Catalysis depends on charge relay system residues Ser-44, His-83, and Asp-118. A C-terminal short (CTS) helix region spans residues 162–173; the sequence is ALMALLGLSALV.

It belongs to the peptidase S26B family. Component of the signal peptidase complex (SPC) composed of a catalytic subunit SEC11 and three accessory subunits SPC1, SPC2 and SPC3. The complex induces a local thinning of the ER membrane which is used to measure the length of the signal peptide (SP) h-region of protein substrates. This ensures the selectivity of the complex towards h-regions shorter than 18-20 amino acids. SPC associates with the translocon complex.

It localises to the endoplasmic reticulum membrane. It catalyses the reaction Cleavage of hydrophobic, N-terminal signal or leader sequences from secreted and periplasmic proteins.. In terms of biological role, catalytic component of the signal peptidase complex (SPC) which catalyzes the cleavage of N-terminal signal sequences from nascent proteins as they are translocated into the lumen of the endoplasmic reticulum. Specifically cleaves N-terminal signal peptides that contain a hydrophobic alpha-helix (h-region) shorter than 18-20 amino acids. This Ogataea parapolymorpha (strain ATCC 26012 / BCRC 20466 / JCM 22074 / NRRL Y-7560 / DL-1) (Yeast) protein is Signal peptidase complex catalytic subunit SEC11 (SEC11).